Here is a 639-residue protein sequence, read N- to C-terminus: Elongation factor 4 (639 aa).

In terms of domain architecture, tr-type G spans 39–220 (AQIRNFCIIA…EVVRLVPPPT (182 aa)). GTP is bound by residues 51–56 (DHGKST) and 167–170 (NKID).

This sequence belongs to the TRAFAC class translation factor GTPase superfamily. Classic translation factor GTPase family. LepA subfamily.

It localises to the cell membrane. The catalysed reaction is GTP + H2O = GDP + phosphate + H(+). Its function is as follows. Required for accurate and efficient protein synthesis under certain stress conditions. May act as a fidelity factor of the translation reaction, by catalyzing a one-codon backward translocation of tRNAs on improperly translocated ribosomes. Back-translocation proceeds from a post-translocation (POST) complex to a pre-translocation (PRE) complex, thus giving elongation factor G a second chance to translocate the tRNAs correctly. Binds to ribosomes in a GTP-dependent manner. The protein is Elongation factor 4 of Mycobacterium sp. (strain JLS).